The primary structure comprises 124 residues: MENDEKEHGRRRRQHLRVPVFPEEKDEIEANAKRAGVSVARYLRDVGQGYQIKGVMDYQHVRELVRVNGDLGRLGGLLKLWLTDDVRTLQFGEATILALLGRIEATQDEMSRIMKAVVQPRAEP.

It localises to the cytoplasm. This protein is essential for positively regulating the expression of transfer genes that are involved in the conjugal transfer of DNA between bacterial cells. The polypeptide is Protein TraJ (traJ) (Escherichia coli).